Consider the following 62-residue polypeptide: [Ser6, Val10, Asp11]-phyllokinin (62 aa).

The signal sequence occupies residues 1 to 22 (MSFLKKSLLLVLFLGLVSFSIC). Positions 23 to 51 (EEEKRETEEEENEDDMDEESEEKKRESPD) are excised as a propeptide. Positions 24–62 (EEKRETEEEENEDDMDEESEEKKRESPDRPPGFSPFRVD) are disordered. The segment covering 30-42 (EEEENEDDMDEES) has biased composition (acidic residues).

The protein belongs to the frog skin active peptide (FSAP) family. Bradykinin-related peptide subfamily. As to expression, expressed by the skin glands.

It localises to the secreted. Functionally, induces relaxation of rat smooth muscle from tail artery and contraction of that from ileum, urinary bladder and uterus. Binds to both bradykinin receptor B1 (BDKRB1) and B2 (BDKRB2). The chain is [Ser6, Val10, Asp11]-phyllokinin from Agalychnis spurrelli (Gliding leaf frog).